Here is a 202-residue protein sequence, read N- to C-terminus: Endothelin-1 (202 aa).

Residues 1–25 form the signal peptide; that stretch reads MDYLPVLFSLLLVVFQGAPEAAVLG. A propeptide spanning residues 26-50 is cleaved from the precursor; it reads AELSTGPDSGGEKPAPSAPWRPRRS. The segment at 28-48 is disordered; sequence LSTGPDSGGEKPAPSAPWRPR. Cystine bridges form between C53–C67 and C55–C63. The propeptide occupies 74 to 202; that stretch reads VNTPEHIVPY…EKKVTHNRTH (129 aa). An endothelin-like region spans residues 110-124; it reads CQCASQKDKKCWTFC.

It belongs to the endothelin/sarafotoxin family.

It localises to the secreted. Endothelins are endothelium-derived vasoconstrictor peptides. Probable ligand for G-protein coupled receptors EDNRA and EDNRB which activates PTK2B, BCAR1, BCAR3 and, GTPases RAP1 and RHOA cascade in glomerular mesangial cells. Also binds the DEAR/FBXW7-AS1 receptor. Promotes mesenteric arterial wall remodeling via activation of ROCK signaling and subsequent colocalization of NFATC3 with F-actin filaments. NFATC3 then translocates to the nucleus where it subsequently promotes the transcription of the smooth muscle hypertrophy and differentiation marker ACTA2. The polypeptide is Endothelin-1 (EDN1) (Felis catus (Cat)).